The chain runs to 217 residues: GrpE protein homolog 1, mitochondrial (217 aa).

The N-terminal 27 residues, 1–27 (MAARCVRLARRSLPALALSFRPSPRLL), are a transit peptide targeting the mitochondrion. Position 94 is an N6-acetyllysine; alternate (lysine 94). An N6-succinyllysine; alternate modification is found at lysine 94. Residue lysine 100 is modified to N6-acetyllysine. Lysine 120 is subject to N6-succinyllysine. Lysine 215 carries the post-translational modification N6-acetyllysine; alternate. Lysine 215 bears the N6-succinyllysine; alternate mark.

Belongs to the GrpE family. As to quaternary structure, probable component of the PAM complex at least composed of a mitochondrial HSP70 protein, GRPEL1 or GRPEL2, TIMM44, TIMM16/PAM16 and TIMM14/DNAJC19. Binds to HSP70, HSC70 and HSJ1B. Ubiquitous. Particularly abundant in heart, kidney and liver.

It localises to the mitochondrion matrix. Functionally, essential component of the PAM complex, a complex required for the translocation of transit peptide-containing proteins from the inner membrane into the mitochondrial matrix in an ATP-dependent manner. Seems to control the nucleotide-dependent binding of mitochondrial HSP70 to substrate proteins. The sequence is that of GrpE protein homolog 1, mitochondrial (Grpel1) from Rattus norvegicus (Rat).